The chain runs to 600 residues: MSKDEHKLPLSKRKESIIFMMILFAFQVFMVVLFSVWVRYSKNEVNYSTLTPEQLQELEATGGVVQEEVTNIYGYFRDINIMIFFGFGFLMTFLRRYGYSALGYTFIISALVAQWSVLIYGFFETVDHKNDHGGDYASTFEMSQTVLLQGLFCAGAVMISYGAVLGRVTPLQMLVVGIFEPIFYFLNMFIGEMNLEAIDVGGGMYIHLFGSVFGLTIAWFLTDKKSKDCEDNSPSYTGDYFAMAGTLFLWMMWPSFNAAIAPLGEPQFRAIANTFLSLTASTIATFIVTRLFGHLGHKIDMVHVQNSSLAGGVVQGCLAHMNINPGGAIGMGFLAGVISVIGYLFISPFLQRRFNIQDTCGIHNLHFMPGFIGSIAACIAAWKGLNDRSLYNPIEFNQIFRAGEDQARNNAAATFISIGIAIAGGLFVGMILKALKKVGGLKAKQYYQDSAFWHVPIDYPKDVEYVVEQNNLPMPTTDNGDNVVGGGVEMKKHNNNNNKKENGYRRDLIRLLETLVRNEQSTDSSYSDSDSSDEEEKERRIRKLAKKSYRRSKKSHSEHQPQHQPEESTFNNNNNNNNNNATAETTDNGGSSTNSPTSKV.

Over 1-16 the chain is Cytoplasmic; the sequence is MSKDEHKLPLSKRKES. Residues 17–37 form a helical membrane-spanning segment; sequence IIFMMILFAFQVFMVVLFSVW. Residues 38-73 are Extracellular-facing; the sequence is VRYSKNEVNYSTLTPEQLQELEATGGVVQEEVTNIY. N-linked (GlcNAc...) asparagine glycosylation occurs at asparagine 46. The helical transmembrane segment at 74 to 94 threads the bilayer; it reads GYFRDINIMIFFGFGFLMTFL. At 95–102 the chain is on the cytoplasmic side; that stretch reads RRYGYSAL. The helical transmembrane segment at 103 to 123 threads the bilayer; sequence GYTFIISALVAQWSVLIYGFF. The Extracellular segment spans residues 124 to 145; that stretch reads ETVDHKNDHGGDYASTFEMSQT. The chain crosses the membrane as a helical span at residues 146 to 166; the sequence is VLLQGLFCAGAVMISYGAVLG. Residues 167–170 are Cytoplasmic-facing; it reads RVTP. Residues 171 to 191 form a helical membrane-spanning segment; sequence LQMLVVGIFEPIFYFLNMFIG. The Extracellular segment spans residues 192–199; the sequence is EMNLEAID. The chain crosses the membrane as a helical span at residues 200-220; it reads VGGGMYIHLFGSVFGLTIAWF. The Cytoplasmic segment spans residues 221 to 240; sequence LTDKKSKDCEDNSPSYTGDY. A helical membrane pass occupies residues 241-261; that stretch reads FAMAGTLFLWMMWPSFNAAIA. At 262 to 274 the chain is on the extracellular side; the sequence is PLGEPQFRAIANT. The chain crosses the membrane as a helical span at residues 275–295; it reads FLSLTASTIATFIVTRLFGHL. Residues 296–303 lie on the Cytoplasmic side of the membrane; the sequence is GHKIDMVH. Residues 304–323 traverse the membrane as a helical segment; sequence VQNSSLAGGVVQGCLAHMNI. Topologically, residues 324–325 are extracellular; that stretch reads NP. A helical transmembrane segment spans residues 326 to 346; sequence GGAIGMGFLAGVISVIGYLFI. Topologically, residues 347-361 are cytoplasmic; the sequence is SPFLQRRFNIQDTCG. The chain crosses the membrane as a helical span at residues 362 to 382; the sequence is IHNLHFMPGFIGSIAACIAAW. At 383 to 411 the chain is on the extracellular side; sequence KGLNDRSLYNPIEFNQIFRAGEDQARNNA. A helical membrane pass occupies residues 412–432; the sequence is AATFISIGIAIAGGLFVGMIL. Residues 433-600 lie on the Cytoplasmic side of the membrane; that stretch reads KALKKVGGLK…SSTNSPTSKV (168 aa). Positions 471–600 are disordered; it reads NLPMPTTDNG…SSTNSPTSKV (130 aa). Positions 498-510 are enriched in basic and acidic residues; sequence NKKENGYRRDLIR. The segment covering 519–529 has biased composition (low complexity); it reads EQSTDSSYSDS. A compositionally biased stretch (basic residues) spans 540-554; sequence RIRKLAKKSYRRSKK. Basic and acidic residues predominate over residues 555–566; it reads SHSEHQPQHQPE. Low complexity predominate over residues 571 to 580; that stretch reads NNNNNNNNNN. The span at 581–600 shows a compositional bias: polar residues; that stretch reads ATAETTDNGGSSTNSPTSKV.

It belongs to the ammonium transporter (TC 2.A.49) family. Rh subfamily.

The protein localises to the membrane. Functionally, may be a carbon dioxide/bicarbonate transporter. The polypeptide is Rhesus-like glycoprotein B (rhgB) (Dictyostelium discoideum (Social amoeba)).